The following is a 505-amino-acid chain: Maturase K (505 aa).

The protein belongs to the intron maturase 2 family. MatK subfamily.

The protein localises to the plastid. It is found in the chloroplast. In terms of biological role, usually encoded in the trnK tRNA gene intron. Probably assists in splicing its own and other chloroplast group II introns. This is Maturase K from Froelichia floridana (Florida snake-cotton).